Reading from the N-terminus, the 120-residue chain is Large ribosomal subunit protein bL20 (120 aa).

It belongs to the bacterial ribosomal protein bL20 family.

In terms of biological role, binds directly to 23S ribosomal RNA and is necessary for the in vitro assembly process of the 50S ribosomal subunit. It is not involved in the protein synthesizing functions of that subunit. This is Large ribosomal subunit protein bL20 from Baumannia cicadellinicola subsp. Homalodisca coagulata.